A 598-amino-acid chain; its full sequence is Nuclear receptor subfamily 4 group A member 2 (598 aa).

A disordered region spans residues 1-22 (MPCVQAQYGSSPQGASPASQSY). A compositionally biased stretch (low complexity) spans 8-22 (YGSSPQGASPASQSY). Positions 260–335 (EGLCAVCGDN…VGMVKEVVRT (76 aa)) form a DNA-binding region, nuclear receptor. 2 NR C4-type zinc fingers span residues 263–283 (CAVC…CEGC) and 299–318 (CLAN…CQYC). The Bipartite nuclear localization signal (NLS1) signature appears at 287–314 (FKRTVQKNAKYVCLANKNCPVDKRRRNR). Residues 337–361 (SLKGRRGRLPSKPKSPQEPSPPSPP) form a disordered region. The short motif at 338–350 (LKGRRGRLPSKPK) is the Nuclear localization signal (NLS1) element. Pro residues predominate over residues 352 to 361 (PQEPSPPSPP). Residues 360 to 595 (PPVSLISALV…AIIDKLFLDT (236 aa)) enclose the NR LBD domain. The short motif at 443–452 (FLELFVLRLA) is the nuclear export sequence (NES1) element. Residues 568-577 (QGLQRIFYLK) carry the nuclear export sequence (NES2) motif.

Belongs to the nuclear hormone receptor family. NR4 subfamily. Interacts with SFPQ, NCOR2, SIN3A and HADC1. The interaction with NCOR2 increases in the absence of PITX3. Interacts with PER2.

The protein localises to the cytoplasm. It is found in the nucleus. In terms of biological role, transcriptional regulator which is important for the differentiation and maintenance of meso-diencephalic dopaminergic (mdDA) neurons during development. It is crucial for expression of a set of genes such as SLC6A3, SLC18A2, TH and DRD2 which are essential for development of mdDA neurons. This chain is Nuclear receptor subfamily 4 group A member 2 (NR4A2), found in Bos taurus (Bovine).